The sequence spans 71 residues: Phenoloxidase 3 (71 aa).

H3 and H29 together coordinate Cu cation.

Belongs to the tyrosinase family. Cu(2+) serves as cofactor. Post-translationally, upon activation, a trypsin type protease cleaves prophenol oxidase to yield the active enzyme. As to expression, hemocytes and plasma.

It is found in the secreted. It carries out the reaction 2 L-dopa + O2 = 2 L-dopaquinone + 2 H2O. It catalyses the reaction L-tyrosine + O2 = L-dopaquinone + H2O. This is a copper-containing oxidase that functions in the formation of pigments such as melanins and other polyphenolic compounds. Catalyzes the rate-limiting conversions of tyrosine to DOPA, DOPA to DOPA-quinone and possibly 5,6 dihydroxyindole to indole-5'6 quinone. The chain is Phenoloxidase 3 from Sarcophaga argyrostoma (Flesh fly).